Consider the following 464-residue polypeptide: MANGKVIQVIGSVVDVEFSADSMPALFNALEIPRENGKMVLEVQSHVGNNRVKCLSFTPTDGLERGAEVIDTTRPLSVPVGRGTLGRIFNVLGEALDNRGDVKSEKTMPIHRLAPGMDELESSAQVLETGIKVIDLIAPFARGGKIGALGGAGVGKTVLIQELIRNIATEHEGFSVFAGVGERSREGNDLWHEMEDSGVLPKTTMVFGQMNELPAVRLRIALTGLTMAEYFRDEERQDVLLFIDNIYRYTLAGMEVSALLGRMPSAVGYQPTLATEMGALQERIASTKQGSITSFQAVYVPADDYTDPGVVATFGHLDAMIALERSLAEQALYPAVDPLASNSRILDPQVVGEEHYKVARDVQKVLQRYKDLQDVIAILGMEELSEEDKLTVARARRIQRFLTQPMFVSEVFTGRPGQYVSLTETIRGFKEILEGKHDSLPEQAFYMVGTIDDAVAEAKKLSAV.

Residue 150–157 (GGAGVGKT) participates in ATP binding.

Belongs to the ATPase alpha/beta chains family. As to quaternary structure, F-type ATPases have 2 components, CF(1) - the catalytic core - and CF(0) - the membrane proton channel. CF(1) has five subunits: alpha(3), beta(3), gamma(1), delta(1), epsilon(1). CF(0) has three main subunits: a(1), b(2) and c(9-12). The alpha and beta chains form an alternating ring which encloses part of the gamma chain. CF(1) is attached to CF(0) by a central stalk formed by the gamma and epsilon chains, while a peripheral stalk is formed by the delta and b chains.

It is found in the cell membrane. The catalysed reaction is ATP + H2O + 4 H(+)(in) = ADP + phosphate + 5 H(+)(out). Functionally, produces ATP from ADP in the presence of a proton gradient across the membrane. The catalytic sites are hosted primarily by the beta subunits. The polypeptide is ATP synthase subunit beta (Dehalococcoides mccartyi (strain ATCC BAA-2100 / JCM 16839 / KCTC 5957 / BAV1)).